Here is a 205-residue protein sequence, read N- to C-terminus: Ribosome maturation factor RimP (205 aa).

It belongs to the RimP family.

The protein resides in the cytoplasm. Required for maturation of 30S ribosomal subunits. This is Ribosome maturation factor RimP from Sinorhizobium fredii (strain NBRC 101917 / NGR234).